Reading from the N-terminus, the 353-residue chain is S-adenosylmethionine:tRNA ribosyltransferase-isomerase (353 aa).

It belongs to the QueA family. As to quaternary structure, monomer.

Its subcellular location is the cytoplasm. It catalyses the reaction 7-aminomethyl-7-carbaguanosine(34) in tRNA + S-adenosyl-L-methionine = epoxyqueuosine(34) in tRNA + adenine + L-methionine + 2 H(+). Its pathway is tRNA modification; tRNA-queuosine biosynthesis. Its function is as follows. Transfers and isomerizes the ribose moiety from AdoMet to the 7-aminomethyl group of 7-deazaguanine (preQ1-tRNA) to give epoxyqueuosine (oQ-tRNA). The protein is S-adenosylmethionine:tRNA ribosyltransferase-isomerase of Burkholderia vietnamiensis (strain G4 / LMG 22486) (Burkholderia cepacia (strain R1808)).